The chain runs to 346 residues: MEDLQLVLFVLGAIAIVAVLVHGFWSIRRQQPKSLKDSPMGNFYKKQAERGEGAPKRVDADGFDADGIGAVRVRKANEAHTPEAPAFNPYLKQEAKAQPQPVEPVQVEPKPLFKQEPSMAQPDFSLQSPTAKEQHRGPKASRQEPVLPGHSANLAQAHVGQSHAAMVAQKAAEEQRAQVQMPTQTALFDEEEAYEEEQPQVVEQPDDDLGEPRDVLVLHVVAKEGQQLNGAELLPCFLTLNFKYGDMNIFHRHVDNAGNGKVLFSIANMVKPGFFDPDNMEQFSTQGVVFFMTLPCYGDALMNFSIMLNSARQLADDIDAVVLDGQRQPWGEFTKQDYLHRIRANA.

At Met1–Leu6 the chain is on the periplasmic side. A helical transmembrane segment spans residues Val7–Ile27. Topologically, residues Arg28 to Ala346 are cytoplasmic. The segment at Glu116–Val146 is disordered.

The protein belongs to the ZipA family. Interacts with FtsZ via their C-terminal domains.

Its subcellular location is the cell inner membrane. Essential cell division protein that stabilizes the FtsZ protofilaments by cross-linking them and that serves as a cytoplasmic membrane anchor for the Z ring. Also required for the recruitment to the septal ring of downstream cell division proteins. The chain is Cell division protein ZipA from Shewanella sp. (strain ANA-3).